The sequence spans 521 residues: GMP synthase [glutamine-hydrolyzing] (521 aa).

In terms of domain architecture, Glutamine amidotransferase type-1 spans 8 to 203 (KILILDFGAQ…VVDVCGCQTL (196 aa)). Cysteine 85 serves as the catalytic Nucleophile. Catalysis depends on residues histidine 177 and glutamate 179. Residues 204-396 (WTAANIIDDQ…LGLPRTMVYR (193 aa)) enclose the GMPS ATP-PPase domain. Residue 231-237 (SGGVDSS) participates in ATP binding.

In terms of assembly, homodimer.

It catalyses the reaction XMP + L-glutamine + ATP + H2O = GMP + L-glutamate + AMP + diphosphate + 2 H(+). Its pathway is purine metabolism; GMP biosynthesis; GMP from XMP (L-Gln route): step 1/1. Its function is as follows. Catalyzes the synthesis of GMP from XMP. This chain is GMP synthase [glutamine-hydrolyzing], found in Stenotrophomonas maltophilia (strain R551-3).